Here is a 157-residue protein sequence, read N- to C-terminus: Mini-ribonuclease 3 (157 aa).

Asp-18 is an active-site residue. The tract at residues Glu-126–Cys-157 is disordered. Basic and acidic residues predominate over residues Gly-130–Glu-141.

The protein belongs to the MrnC RNase family. In terms of assembly, homodimer. Requires Mg(2+) as cofactor.

The protein resides in the cytoplasm. Its function is as follows. Involved in correct processing of both the 5' and 3' ends of 23S rRNA precursor. Processes 30S rRNA precursor transcript even in absence of ribonuclease 3 (Rnc); Rnc processes 30S rRNA into smaller rRNA precursors. The chain is Mini-ribonuclease 3 from Desulfitobacterium hafniense (strain Y51).